Reading from the N-terminus, the 179-residue chain is Natural killer cells antigen CD94 (179 aa).

Residues 1 to 10 (MAVSRITRWR) lie on the Cytoplasmic side of the membrane. A helical; Signal-anchor for type II membrane protein transmembrane segment spans residues 11-31 (LMSVIFGIKCLFLMVTLGVLL). At 32–179 (INSFTIQNIQ…NRYICKKLPI (148 aa)) the chain is on the extracellular side. Cystine bridges form between Cys58/Cys70, Cys61/Cys72, Cys89/Cys174, and Cys152/Cys166. The C-type lectin domain occupies 68-175 (HQCNCYFISK…CENKNRYICK (108 aa)). N-linked (GlcNAc...) asparagine glycosylation is found at Asn93 and Asn109.

Can form disulfide-bonded heterodimer with NKG2 family members KLRC1 and KLRC2. KLRD1-KLRC1 heterodimer interacts with peptide-bound MHC-E-B2M heterotrimeric complex. KLRD1 plays a prominent role in directly interacting with MHC-E. KLRD1-KLRC1 interacts with much higher affinity with peptide-bound MHC-E-B2M than KLRD1-KLRC2. Interacts with the adapter protein TYROBP/DAP12; this interaction is required for cell surface expression and cell activation.

Its subcellular location is the cell membrane. Its function is as follows. Immune receptor involved in self-nonself discrimination. In complex with KLRC1 or KLRC2 on cytotoxic and regulatory lymphocyte subsets, recognizes non-classical major histocompatibility (MHC) class Ib molecule MHC-E loaded with self-peptides derived from the signal sequence of classical MHC class Ia and non-classical MHC class Ib molecules. Enables cytotoxic cells to monitor the expression of MHC class I molecules in healthy cells and to tolerate self. Primarily functions as a ligand binding subunit as it lacks the capacity to signal. KLRD1-KLRC1 acts as an immune inhibitory receptor. Key inhibitory receptor on natural killer (NK) cells that regulates their activation and effector functions. Dominantly counteracts T cell receptor signaling on a subset of memory/effector CD8-positive T cells as part of an antigen-driven response to avoid autoimmunity. On intraepithelial CD8-positive gamma-delta regulatory T cells triggers TGFB1 secretion, which in turn limits the cytotoxic programming of intraepithelial CD8-positive alpha-beta T cells, distinguishing harmless from pathogenic antigens. In MHC-E-rich tumor microenvironment, acts as an immune inhibitory checkpoint and may contribute to progressive loss of effector functions of NK cells and tumor-specific T cells, a state known as cell exhaustion. Upon MHC-E-peptide binding, transmits intracellular signals through KLRC1 immunoreceptor tyrosine-based inhibition motifs (ITIMs) by recruiting INPP5D/SHIP-1 and INPPL1/SHIP-2 tyrosine phosphatases to ITIMs, and ultimately opposing signals transmitted by activating receptors through dephosphorylation of proximal signaling molecules. In terms of biological role, KLRD1-KLRC2 acts as an immune activating receptor. On cytotoxic lymphocyte subsets recognizes MHC-E loaded with signal sequence-derived peptides from non-classical MHC class Ib MHC-G molecules, likely playing a role in the generation and effector functions of adaptive NK cells and in maternal-fetal tolerance during pregnancy. Regulates the effector functions of terminally differentiated cytotoxic lymphocyte subsets, and in particular may play a role in adaptive NK cell response to viral infection. Upon MHC-E-peptide binding, transmits intracellular signals via the adapter protein TYROBP/DAP12, triggering the phosphorylation of proximal signaling molecules and cell activation. This chain is Natural killer cells antigen CD94 (Klrd1), found in Mus musculus (Mouse).